Reading from the N-terminus, the 527-residue chain is Serine/threonine-protein kinase NLK (527 aa).

2 sufficient for interaction with DAPK3 regions span residues 1-125 and 124-416; these read MSLC…KAHH and HHHQ…SKRI. Required for interaction with TAB2 regions lie at residues 1-304 and 434-527; these read MSLC…VVTQ and YHTC…LVWE. Disordered stretches follow at residues 22–72 and 90–140; these read AAAA…SSAA and QQPY…DIEP. The span at 26-54 shows a compositional bias: basic residues; it reads GHHHHHHHHLPHLPPPHLHHHHHPQHHLH. A compositionally biased stretch (low complexity) spans 103 to 119; it reads PGPAAAAPAQVQAAAAA. Residues 122-131 show a composition bias toward basic residues; it reads KAHHHQHSHH. The 290-residue stretch at 138–427 folds into the Protein kinase domain; sequence IEPDRPIGYG…AKDALAHPYL (290 aa). ATP is bound by residues 144–152 and lysine 167; that span reads IGYGAFGVV. Aspartate 264 (proton acceptor) is an active-site residue. The residue at position 298 (threonine 298) is a Phosphothreonine; by autocatalysis. The short motif at 298–300 is the TQE element; the sequence is TQE. Residues 428-527 form a required for homodimerization and kinase activation and localization to the nucleus region; that stretch reads DEGRLRYHTC…EMPPSPLVWE (100 aa). Serine 522 is subject to Phosphoserine.

This sequence belongs to the protein kinase superfamily. CMGC Ser/Thr protein kinase family. MAP kinase subfamily. Homodimer. Homodimerization is required for intermolecular autophosphorylation, kinase activation and nuclear localization. May interact with components of cullin-RING-based SCF (SKP1-CUL1-F-box protein) E3 ubiquitin-protein ligase complexes. Interacts with LEF1, MEF2A, MYBL1 and MYBL2. Interacts with the upstream activating kinases HIPK2 and MAP3K7/TAK1. Interaction with MAP3K7/TAK1 seems to be indirect, and may be mediated by other proteins such as STAT3, TAB1 and TAB2. Interacts with and phosphorylates a number of transcription factors including FOXO1, FOXO3, FOXO4, MYB, NOTCH1 and TCF7L2/TCF4. Interacts with DAPK3/ZIPK, and this interaction may disrupt interaction with transcription factors such as TCF7L2/TCF4. Forms a transcriptional repressor complex with CHD7, PPARG and SETDB1. Interacts with RNF138/NARF. Interacts with ATF5; the interaction stabilizes ATF5 at the protein level in a kinase-independent manner. It depends on Mg(2+) as a cofactor. In terms of processing, phosphorylated on Thr-298. Intermolecular autophosphorylation on Thr-298 activates the enzyme.

It is found in the nucleus. It localises to the cytoplasm. It catalyses the reaction L-seryl-[protein] + ATP = O-phospho-L-seryl-[protein] + ADP + H(+). It carries out the reaction L-threonyl-[protein] + ATP = O-phospho-L-threonyl-[protein] + ADP + H(+). Activated by the non-canonical Wnt signaling pathway, in which WNT5A leads to activation of MAP3K7/TAK1 and HIPK2, which subsequently phosphorylates and activates this protein. Activated by dimerization and subsequent intermolecular autophosphorylation on Thr-298. Other cytokines such as IL6 may also activate this regulatory circuit. Serine/threonine-protein kinase that regulates a number of transcription factors with key roles in cell fate determination. Positive effector of the non-canonical Wnt signaling pathway, acting downstream of WNT5A, MAP3K7/TAK1 and HIPK2. Negative regulator of the canonical Wnt/beta-catenin signaling pathway. Binds to and phosphorylates TCF7L2/TCF4 and LEF1, promoting the dissociation of the TCF7L2/LEF1/beta-catenin complex from DNA, as well as the ubiquitination and subsequent proteolysis of LEF1. Together these effects inhibit the transcriptional activation of canonical Wnt/beta-catenin target genes. Negative regulator of the Notch signaling pathway. Binds to and phosphorylates NOTCH1, thereby preventing the formation of a transcriptionally active ternary complex of NOTCH1, RBPJ/RBPSUH and MAML1. Negative regulator of the MYB family of transcription factors. Phosphorylation of MYB leads to its subsequent proteolysis while phosphorylation of MYBL1 and MYBL2 inhibits their interaction with the coactivator CREBBP. Other transcription factors may also be inhibited by direct phosphorylation of CREBBP itself. Acts downstream of IL6 and MAP3K7/TAK1 to phosphorylate STAT3, which is in turn required for activation of NLK by MAP3K7/TAK1. Upon IL1B stimulus, cooperates with ATF5 to activate the transactivation activity of C/EBP subfamily members. Phosphorylates ATF5 but also stabilizes ATF5 protein levels in a kinase-independent manner. Acts as an inhibitor of the mTORC1 complex in response to osmotic stress by mediating phosphorylation of RPTOR, thereby preventing recruitment of the mTORC1 complex to lysosomes. In Canis lupus familiaris (Dog), this protein is Serine/threonine-protein kinase NLK (NLK).